The sequence spans 398 residues: Tyrosine--tRNA ligase (398 aa).

The short motif at 42 to 51 (PTAPDIHLGH) is the 'HIGH' region element. The 'KMSKS' region signature appears at 226 to 230 (KMSKS). K229 contributes to the ATP binding site. An S4 RNA-binding domain is found at 336–397 (LAIANLLKDA…GKRKFAKVTL (62 aa)).

This sequence belongs to the class-I aminoacyl-tRNA synthetase family. TyrS type 2 subfamily. Homodimer.

It is found in the cytoplasm. The catalysed reaction is tRNA(Tyr) + L-tyrosine + ATP = L-tyrosyl-tRNA(Tyr) + AMP + diphosphate + H(+). Catalyzes the attachment of tyrosine to tRNA(Tyr) in a two-step reaction: tyrosine is first activated by ATP to form Tyr-AMP and then transferred to the acceptor end of tRNA(Tyr). This chain is Tyrosine--tRNA ligase, found in Shewanella oneidensis (strain ATCC 700550 / JCM 31522 / CIP 106686 / LMG 19005 / NCIMB 14063 / MR-1).